The chain runs to 455 residues: tRNA modification GTPase MnmE (455 aa).

Positions 24, 81, and 120 each coordinate (6S)-5-formyl-5,6,7,8-tetrahydrofolate. The 163-residue stretch at 216–378 folds into the TrmE-type G domain; that stretch reads GMTVVIAGRP…LREHLKACMG (163 aa). Asparagine 226 is a K(+) binding site. Residues 226-231, 245-251, 270-273, and 335-338 each bind GTP; these read NAGKSS, TDIAGTT, DTAG, and NKAD. Residue serine 230 participates in Mg(2+) binding. Positions 245, 247, and 250 each coordinate K(+). Position 251 (threonine 251) interacts with Mg(2+). Lysine 455 contacts (6S)-5-formyl-5,6,7,8-tetrahydrofolate.

Belongs to the TRAFAC class TrmE-Era-EngA-EngB-Septin-like GTPase superfamily. TrmE GTPase family. In terms of assembly, homodimer. Heterotetramer of two MnmE and two MnmG subunits. The cofactor is K(+).

The protein resides in the cytoplasm. Functionally, exhibits a very high intrinsic GTPase hydrolysis rate. Involved in the addition of a carboxymethylaminomethyl (cmnm) group at the wobble position (U34) of certain tRNAs, forming tRNA-cmnm(5)s(2)U34. In Ectopseudomonas mendocina (strain ymp) (Pseudomonas mendocina), this protein is tRNA modification GTPase MnmE.